A 119-amino-acid polypeptide reads, in one-letter code: Autophagy-related protein 8A (119 aa).

A lipid anchor (Phosphatidylethanolamine amidated glycine) is attached at glycine 117. A propeptide spans 118–119 (SA) (removed in mature form).

Belongs to the ATG8 family. As to quaternary structure, interacts with ATG4. Post-translationally, the C-terminal 2 residues are removed by ATG4 to expose Gly-117 at the C-terminus. The C-terminal Gly is then amidated with phosphatidylethanolamine by an activating system similar to that for ubiquitin. Constitutively expressed.

It localises to the cytoplasmic vesicle. The protein resides in the autophagosome membrane. It is found in the vacuole membrane. Its subcellular location is the cytoplasm. The protein localises to the cytoskeleton. Ubiquitin-like modifier involved in cytoplasm to vacuole transport (Cvt) vesicles and autophagosomes formation. May mediate the delivery of the vesicles and autophagosomes to the vacuole via the microtubule cytoskeleton. Functionally, ubiquitin-like modifier involved in autophagosomes formation. May mediate the delivery of the autophagosomes to the vacuole via the microtubule cytoskeleton. This chain is Autophagy-related protein 8A (ATG8A), found in Oryza sativa subsp. indica (Rice).